Reading from the N-terminus, the 61-residue chain is [Thr6]-bradykinyl-Val,Asp (61 aa).

A signal peptide spans 1-22 (MSFLKKSLFLVLFLGFVSFSIC). Residues 23–50 (EEEKREDEEEENEREENKESEEKRNQEE) constitute a propeptide that is removed on maturation. Residues 24–61 (EEKREDEEEENEREENKESEEKRNQEERPPGFTPFRVD) form a disordered region. Positions 26–36 (KREDEEEENER) are enriched in acidic residues. Over residues 37 to 52 (EENKESEEKRNQEERP) the composition is skewed to basic and acidic residues. P53 bears the 4-hydroxyproline; in form [Hyp3,Thr6]-bradykinyl-Val,Asp and [Hyp3,Thr6]-bradykinin mark.

The protein belongs to the frog skin active peptide (FSAP) family. Bradykinin-related peptide subfamily. As to expression, expressed by the skin glands.

It localises to the secreted. Induces relaxation of rat smooth muscle from tail artery (EC(50)=16.8 nM) and contraction of that from ileum (EC(50)=205 nM), urinary bladder (EC(50)=895 nM) and uterus (EC(50)=60.3 nM). Binds to both bradykinin receptor B1 (BDKRB1) and B2 (BDKRB2). Functionally, [Hyp3,Thr6]-bradykinin: Induces relaxation of rat smooth muscle from tail artery (EC(50)=56.7 nM) and contraction of that from ileum (EC(50)=588 nM), urinary bladder (EC(50)=4.6 uM) and uterus (EC(50)=3.9 nM). Binds to both bradykinin receptor B1 (BDKRB1) and B2 (BDKRB2). In arterial smooth muscle, the effect via BDKRB1 is stronger, in uterus, ileum and urinary bladder the effect via BDKRB2. In terms of biological role, induces relaxation of rat smooth muscle from tail artery (EC(50)=10.8 nM) and contraction of that from ileum (EC(50)=645 nM), urinary bladder (EC(50)=1.1 uM) and uterus (EC(50)=1.2 uM). Binds to both bradykinin receptor B1 (BDKRB1) and B2 (BDKRB2). Apart from uterus smooth muscle, the effect via BDKRB2 is stronger. Its function is as follows. [Hyp3,Thr6]-bradykinyl-Val,Asp: Induces relaxation of rat smooth muscle from tail artery (EC(50)=3.5 nM) and contraction of that from ileum (EC(50)=223 nM), urinary bladder (EC(50)=1.5 uM) and uterus (EC(50)=356 nM). Binds to both bradykinin receptor B1 (BDKRB1) and B2 (BDKRB2); the effects via BDKRB2 are stronger. The polypeptide is [Thr6]-bradykinyl-Val,Asp (Agalychnis dacnicolor (Giant Mexican leaf frog)).